We begin with the raw amino-acid sequence, 407 residues long: Elongation factor Tu, chloroplastic (407 aa).

The tr-type G domain occupies 10–212 (KPHVNIGTIG…SVDNYIPAPE (203 aa)). The tract at residues 19–26 (GHVDHGKT) is G1. 19 to 26 (GHVDHGKT) is a GTP binding site. Threonine 26 provides a ligand contact to Mg(2+). A G2 region spans residues 59–63 (GITIN). The interval 80–83 (DCPG) is G3. GTP is bound by residues 80–84 (DCPGH) and 135–138 (NKAD). A G4 region spans residues 135 to 138 (NKAD). The G5 stretch occupies residues 173–175 (SAL).

It belongs to the TRAFAC class translation factor GTPase superfamily. Classic translation factor GTPase family. EF-Tu/EF-1A subfamily.

It localises to the plastid. It is found in the chloroplast. It carries out the reaction GTP + H2O = GDP + phosphate + H(+). Its function is as follows. GTP hydrolase that promotes the GTP-dependent binding of aminoacyl-tRNA to the A-site of ribosomes during protein biosynthesis. The protein is Elongation factor Tu, chloroplastic (tufA) of Emiliania huxleyi (Coccolithophore).